The chain runs to 389 residues: MLLALAQWLQNDVGFLRVFSYLTFRAVAATITALLIGLVCGPWVIRKLTQMKVGQAVRKDGPQTHLVKSGTPTMGGVLILIGIAVSTLLWADLTNRFIWIVMLVTFGFGVIGWVDDYRKVVYKDPRGMSSREKYFWQSLIGLFAAVYLAFSVSEASNVRVFDLFMAWVRSGLSMGLPARADLLLPFLKSMTYPLGVWGFIALTYLVIVGSSNAVNLTDGLDGLVIMPVVLVGSSLGVFAYVMGSAVYSKYLLFPHIAGAGEMLIFCSAMGGAGLAFLWFNTHPAQVFMGDVGALALGGALGTIAVIVRQEIVLFIMGGIFVAETVSVMLQVTWFKFTKARFGEGRRIFKMAPLHHHFELSGWKETQVVVRFWIITLMLCLFGLSTLKLR.

Transmembrane regions (helical) follow at residues 25 to 45 (RAVA…PWVI), 73 to 93 (TMGG…WADL), 97 to 117 (FIWI…VDDY), 135 to 155 (FWQS…VSEA), 189 to 209 (SMTY…VIVG), 222 to 242 (GLVI…AYVM), 259 to 279 (AGEM…FLWF), 286 to 306 (VFMG…IAVI), 311 to 331 (IVLF…MLQV), and 366 to 386 (QVVV…LSTL).

It belongs to the glycosyltransferase 4 family. MraY subfamily. It depends on Mg(2+) as a cofactor.

The protein localises to the cell inner membrane. The enzyme catalyses UDP-N-acetyl-alpha-D-muramoyl-L-alanyl-gamma-D-glutamyl-meso-2,6-diaminopimeloyl-D-alanyl-D-alanine + di-trans,octa-cis-undecaprenyl phosphate = di-trans,octa-cis-undecaprenyl diphospho-N-acetyl-alpha-D-muramoyl-L-alanyl-D-glutamyl-meso-2,6-diaminopimeloyl-D-alanyl-D-alanine + UMP. The protein operates within cell wall biogenesis; peptidoglycan biosynthesis. In terms of biological role, catalyzes the initial step of the lipid cycle reactions in the biosynthesis of the cell wall peptidoglycan: transfers peptidoglycan precursor phospho-MurNAc-pentapeptide from UDP-MurNAc-pentapeptide onto the lipid carrier undecaprenyl phosphate, yielding undecaprenyl-pyrophosphoryl-MurNAc-pentapeptide, known as lipid I. The protein is Phospho-N-acetylmuramoyl-pentapeptide-transferase of Paraburkholderia phymatum (strain DSM 17167 / CIP 108236 / LMG 21445 / STM815) (Burkholderia phymatum).